The primary structure comprises 318 residues: Probable cell division protein WhiA (318 aa).

Residues 281-314 (SLKELGEMLSPPVGKSGVNHRLRRIEKIAEELSK) constitute a DNA-binding region (H-T-H motif).

It belongs to the WhiA family.

In terms of biological role, involved in cell division and chromosome segregation. The protein is Probable cell division protein WhiA of Clostridium tetani (strain Massachusetts / E88).